Reading from the N-terminus, the 866-residue chain is DNA mismatch repair protein MutS (866 aa).

ATP is bound at residue 613 to 620; the sequence is GPNMGGKS.

This sequence belongs to the DNA mismatch repair MutS family.

Its function is as follows. This protein is involved in the repair of mismatches in DNA. It is possible that it carries out the mismatch recognition step. This protein has a weak ATPase activity. The polypeptide is DNA mismatch repair protein MutS (Haemophilus ducreyi (strain 35000HP / ATCC 700724)).